The chain runs to 71 residues: MKTVSTVAILAIFLLIVITTIETNRILPTLIGPLGRRSKLETFKRIARTLSAGISAKRSLEDVNSLTGMSS.

The N-terminal stretch at 1–23 is a signal peptide; that stretch reads MKTVSTVAILAIFLLIVITTIET. Residue Leu34 is modified to Leucine amide. A propeptide spanning residues 38–71 is cleaved from the precursor; that stretch reads SKLETFKRIARTLSAGISAKRSLEDVNSLTGMSS.

This sequence belongs to the non-disulfide-bridged peptide (NDBP) superfamily. Short antimicrobial peptide (group 4) family. Expressed by the venom gland.

The protein resides in the secreted. In terms of biological role, antimicrobial peptide. The chain is Peptide Ctri9819 from Chaerilus tricostatus (Scorpion).